The sequence spans 363 residues: MEPSSETGMDPPLSQETFEDLWSLLPDPLQTVTCRLDNLSEFPDYPLAADMTVLQEGLMGNAVPTVTSCAVPSTDDYAGKYGLQLDFQQNGTAKSVTCTYSPELNKLFCQLAKTCPLLVRVESPPPRGSILRATAVYKKSEHVAEVVKRCPHHERSVEPGEDAAPPSHLMRVEGNLQAYYMEDVNSGRHSVCVPYEGPQVGTECTTVLYNYMCNSSCMGGMNRRPILTIITLETPQGLLLGRRCFEVRVCACPGRDRRTEEDNYTKKRGLKPSGKRELAHPPSSEPPLPKKRLVVVDDDEEIFTLRIKGRSRYEMIKKLNDALELQESLDQQKVTIKCRKCRDEIKPKKGKKLLVKDEQPDSE.

A transcription activation (acidic) region spans residues 1 to 29 (MEPSSETGMDPPLSQETFEDLWSLLPDPL). The DNA-binding element occupies 76–267 (DYAGKYGLQL…RTEEDNYTKK (192 aa)). Residues Cys150, His153, Cys213, and Cys217 each coordinate Zn(2+). Positions 248 to 255 (RVCACPGR) are interaction with DNA. Residues 257 to 290 (RRTEEDNYTKKRGLKPSGKRELAHPPSSEPPLPK) form a disordered region. The Bipartite nuclear localization signal motif lies at 275 to 292 (KRELAHPPSSEPPLPKKR). The oligomerization stretch occupies residues 300-331 (EEIFTLRIKGRSRYEMIKKLNDALELQESLDQ). A Nuclear export signal motif is present at residues 314-325 (EMIKKLNDALEL). The tract at residues 344-356 (EIKPKKGKKLLVK) is basic (repression of DNA-binding).

The protein belongs to the p53 family. As to quaternary structure, binds DNA as a homotetramer. Zn(2+) is required as a cofactor. Ubiquitous.

It localises to the cytoplasm. The protein localises to the nucleus. Functionally, multifunctional transcription factor that induces cell cycle arrest, DNA repair or apoptosis upon binding to its target DNA sequence. Acts as a tumor suppressor in many tumor types; induces growth arrest or apoptosis depending on the physiological circumstances and cell type. Negatively regulates cell division by controlling expression of a set of genes required for this process. One of the activated genes is an inhibitor of cyclin-dependent kinases. Apoptosis induction seems to be mediated either by stimulation of BAX and FAS antigen expression, or by repression of Bcl-2 expression. The polypeptide is Cellular tumor antigen p53 (tp53) (Xenopus laevis (African clawed frog)).